The sequence spans 155 residues: Small ribosomal subunit protein uS7 (155 aa).

The protein belongs to the universal ribosomal protein uS7 family. As to quaternary structure, part of the 30S ribosomal subunit. Contacts proteins S9 and S11.

Its function is as follows. One of the primary rRNA binding proteins, it binds directly to 16S rRNA where it nucleates assembly of the head domain of the 30S subunit. Is located at the subunit interface close to the decoding center, probably blocks exit of the E-site tRNA. The chain is Small ribosomal subunit protein uS7 from Thermotoga petrophila (strain ATCC BAA-488 / DSM 13995 / JCM 10881 / RKU-1).